We begin with the raw amino-acid sequence, 93 residues long: MARSLKKGPFVDEYIIKKVIAAKKAKDNKPIKTWSRRSTITPEMIGLTFNVHNGKSFIPVYVTEHHIGYKLGEFAPTRTFKGHRGSVQKKIGK.

This sequence belongs to the universal ribosomal protein uS19 family.

Functionally, protein S19 forms a complex with S13 that binds strongly to the 16S ribosomal RNA. This Campylobacter hominis (strain ATCC BAA-381 / DSM 21671 / CCUG 45161 / LMG 19568 / NCTC 13146 / CH001A) protein is Small ribosomal subunit protein uS19.